A 148-amino-acid polypeptide reads, in one-letter code: Small ribosomal subunit protein uS9 (148 aa).

The protein belongs to the universal ribosomal protein uS9 family.

This Drosophila melanogaster (Fruit fly) protein is Small ribosomal subunit protein uS9 (RpS16).